Reading from the N-terminus, the 242-residue chain is Phosphate import ATP-binding protein PstB 1 (242 aa).

The ABC transporter domain maps to Met-1–Ile-237. Position 28–35 (Gly-28–Ser-35) interacts with ATP.

This sequence belongs to the ABC transporter superfamily. Phosphate importer (TC 3.A.1.7) family. The complex is composed of two ATP-binding proteins (PstB), two transmembrane proteins (PstC and PstA) and a solute-binding protein (PstS).

It is found in the cell membrane. It carries out the reaction phosphate(out) + ATP + H2O = ADP + 2 phosphate(in) + H(+). In terms of biological role, part of the ABC transporter complex PstSACB involved in phosphate import. Responsible for energy coupling to the transport system. In Symbiobacterium thermophilum (strain DSM 24528 / JCM 14929 / IAM 14863 / T), this protein is Phosphate import ATP-binding protein PstB 1.